Here is a 300-residue protein sequence, read N- to C-terminus: Pantoate--beta-alanine ligase (300 aa).

An ATP-binding site is contributed by 43-50 (MGYLHSGH). The Proton donor role is filled by histidine 50. Glutamine 74 contacts (R)-pantoate. Glutamine 74 provides a ligand contact to beta-alanine. Residue 162–165 (GQKD) coordinates ATP. Residue glutamine 168 participates in (R)-pantoate binding. Residues isoleucine 191 and 199–202 (KSSR) each bind ATP.

This sequence belongs to the pantothenate synthetase family. In terms of assembly, homodimer.

It localises to the cytoplasm. It catalyses the reaction (R)-pantoate + beta-alanine + ATP = (R)-pantothenate + AMP + diphosphate + H(+). It functions in the pathway cofactor biosynthesis; (R)-pantothenate biosynthesis; (R)-pantothenate from (R)-pantoate and beta-alanine: step 1/1. Its function is as follows. Catalyzes the condensation of pantoate with beta-alanine in an ATP-dependent reaction via a pantoyl-adenylate intermediate. This is Pantoate--beta-alanine ligase (panC) from Dictyostelium discoideum (Social amoeba).